We begin with the raw amino-acid sequence, 389 residues long: Succinate--CoA ligase [ADP-forming] subunit beta (389 aa).

The region spanning 9–244 is the ATP-grasp domain; the sequence is KQLFEHYGLP…LTQNDAREAE (236 aa). ATP contacts are provided by residues K46, 53 to 55, E99, C102, and E107; that span reads GRG. Residues N199 and D213 each contribute to the Mg(2+) site. Residues N264 and 321–323 each bind substrate; that span reads GIV.

It belongs to the succinate/malate CoA ligase beta subunit family. As to quaternary structure, heterotetramer of two alpha and two beta subunits. Requires Mg(2+) as cofactor.

The catalysed reaction is succinate + ATP + CoA = succinyl-CoA + ADP + phosphate. The enzyme catalyses GTP + succinate + CoA = succinyl-CoA + GDP + phosphate. The protein operates within carbohydrate metabolism; tricarboxylic acid cycle; succinate from succinyl-CoA (ligase route): step 1/1. Succinyl-CoA synthetase functions in the citric acid cycle (TCA), coupling the hydrolysis of succinyl-CoA to the synthesis of either ATP or GTP and thus represents the only step of substrate-level phosphorylation in the TCA. The beta subunit provides nucleotide specificity of the enzyme and binds the substrate succinate, while the binding sites for coenzyme A and phosphate are found in the alpha subunit. In Haemophilus influenzae (strain ATCC 51907 / DSM 11121 / KW20 / Rd), this protein is Succinate--CoA ligase [ADP-forming] subunit beta.